We begin with the raw amino-acid sequence, 294 residues long: uncharacterized protein (294 aa).

Transmembrane regions (helical) follow at residues alanine 21–phenylalanine 41, proline 51–alanine 71, and isoleucine 77–phenylalanine 97. The disordered stretch occupies residues histidine 156–isoleucine 176. Residues glutamate 184–serine 215 are a coiled coil. Basic and acidic residues predominate over residues glutamine 265–phenylalanine 277. The interval glutamine 265–asparagine 294 is disordered.

The protein resides in the mitochondrion membrane. This is an uncharacterized protein from Arabidopsis thaliana (Mouse-ear cress).